The following is a 342-amino-acid chain: N-acetyl-gamma-glutamyl-phosphate reductase (342 aa).

C146 is a catalytic residue.

It belongs to the NAGSA dehydrogenase family. Type 1 subfamily.

The protein localises to the cytoplasm. The enzyme catalyses N-acetyl-L-glutamate 5-semialdehyde + phosphate + NADP(+) = N-acetyl-L-glutamyl 5-phosphate + NADPH + H(+). The protein operates within amino-acid biosynthesis; L-arginine biosynthesis; N(2)-acetyl-L-ornithine from L-glutamate: step 3/4. Functionally, catalyzes the NADPH-dependent reduction of N-acetyl-5-glutamyl phosphate to yield N-acetyl-L-glutamate 5-semialdehyde. The sequence is that of N-acetyl-gamma-glutamyl-phosphate reductase from Streptomyces avermitilis (strain ATCC 31267 / DSM 46492 / JCM 5070 / NBRC 14893 / NCIMB 12804 / NRRL 8165 / MA-4680).